A 102-amino-acid chain; its full sequence is MKKVLALVVAAAMGLSSAAFAAETAITPAPTATTTKAAPAKTTHHKKQHKAAPAQKAQAAKKHHKNAKAEQKAPEQKAQAAKKHAKKHSHQQPAKPAAQPAA.

Residues 1 to 21 (MKKVLALVVAAAMGLSSAAFA) form the signal peptide. Residues 22–58 (AETAITPAPTATTTKAAPAKTTHHKKQHKAAPAQKAQ) constitute a propeptide that is removed on maturation. A compositionally biased stretch (low complexity) spans 26-41 (ITPAPTATTTKAAPAK). A disordered region spans residues 26–102 (ITPAPTATTT…PAKPAAQPAA (77 aa)). Positions 80–90 (AAKKHAKKHSH) are enriched in basic residues. Positions 91–102 (QQPAKPAAQPAA) are enriched in low complexity.

The protein belongs to the Asr family. In terms of processing, proteolytic processing gives rise to the active protein.

It is found in the periplasm. Functionally, required for growth and/or survival at acidic conditions. This Escherichia coli O81 (strain ED1a) protein is Acid shock protein.